A 1049-amino-acid chain; its full sequence is Probable disease resistance protein RF9 (1049 aa).

A coiled-coil region spans residues 25-41; the sequence is QGVEDQVTELKRDLNLL. The tract at residues 139 to 158 is disordered; that stretch reads GYKQPQGDKQREMRPRFSKD. Over residues 144-158 the composition is skewed to basic and acidic residues; sequence QGDKQREMRPRFSKD. Residues 147-460 form the NB-ARC domain; the sequence is KQREMRPRFS…AEGIFQPRHY (314 aa). Position 190–197 (190–197) interacts with ATP; that stretch reads GMGGLGKT. LRR repeat units follow at residues 584 to 608, 609 to 634, 657 to 682, 683 to 707, 776 to 799, 800 to 827, 849 to 873, 896 to 923, 945 to 968, and 990 to 1015; these read LELLRVLDIHRAKLKGGKLASSIGQ, LIHLRYLNLKHAEVTHIPYSLGNLKL, MQQLRYLALPKDMGRKTKLELSNLVK, LETLKNFSTKNCSLEDLRGMVRLRT, PSHLTTLYLQHCRLEEDPMPILEK, LHQLKELELRRKSFSGKEMVCSSGGFPQ, MPVLHTLDIRDCRKLKQLPDEHLPS, LVHLKELQLLFRSFSGRIMVCAGSGFPQ, MPQLHTLEIRRCPKLKKLPNGFPQ, and MPLLHTLRIWNCPKLKQLPDGLRFIY.

This sequence belongs to the disease resistance NB-LRR family.

Potential disease resistance protein. The sequence is that of Probable disease resistance protein RF9 (RF9) from Arabidopsis thaliana (Mouse-ear cress).